We begin with the raw amino-acid sequence, 1071 residues long: ATP-dependent helicase/deoxyribonuclease subunit B (1071 aa).

Belongs to the helicase family. AddB/RexB type 2 subfamily. As to quaternary structure, heterodimer of AddA and RexB. Mg(2+) is required as a cofactor.

The heterodimer acts as both an ATP-dependent DNA helicase and an ATP-dependent, dual-direction single-stranded exonuclease. Recognizes the chi site generating a DNA molecule suitable for the initiation of homologous recombination. This subunit has 5' -&gt; 3' nuclease activity but not helicase activity. The polypeptide is ATP-dependent helicase/deoxyribonuclease subunit B (Streptococcus pyogenes serotype M12 (strain MGAS2096)).